A 312-amino-acid polypeptide reads, in one-letter code: Olfactory receptor-like protein COR5 (312 aa).

Residues 1-26 are Extracellular-facing; that stretch reads MALGNCTTPTTFILSGLTDNPRLQMP. An N-linked (GlcNAc...) asparagine glycan is attached at Asn-5. A helical transmembrane segment spans residues 27–49; sequence LFMVFLAIYTITLLANLGLIALI. Over 50–57 the chain is Cytoplasmic; it reads SVDFHLQT. A helical transmembrane segment spans residues 58–79; that stretch reads PMYIFLQNLSFTDAAYSTVITP. Residues 80–100 are Extracellular-facing; it reads KMLATFLEERRTISYVGCILQ. Residues Cys-97 and Cys-179 are joined by a disulfide bond. A helical membrane pass occupies residues 101-120; that stretch reads YFSFVLLTSSECLLLAVMAY. Residues 121–139 are Cytoplasmic-facing; the sequence is DRYVAICKPLLYPAIMTKA. The chain crosses the membrane as a helical span at residues 140–164; that stretch reads VCWRLVEGLYSLAFLNSLVHTSGLL. The Extracellular portion of the chain corresponds to 165–205; it reads KLSFCSSNVVNHFFCDNSPLFQISSSSTTLNELLVFIFGSW. The helical transmembrane segment at 206–226 threads the bilayer; sequence FAMSSIITTPISYVFIILTVV. The Cytoplasmic portion of the chain corresponds to 227-239; sequence RIRSKDGKYKAFS. A helical membrane pass occupies residues 240–260; it reads TCTSHLMAVSLFHGTVIFMYL. The Extracellular portion of the chain corresponds to 261–271; the sequence is RPVKLFSLDTD. The chain crosses the membrane as a helical span at residues 272–292; that stretch reads KIASLFYTVVIPMLNPLIYSW. Over 293 to 312 the chain is Cytoplasmic; it reads RNKEVKDALRRVIATNVWIH.

This sequence belongs to the G-protein coupled receptor 1 family.

It is found in the cell membrane. Its function is as follows. Odorant receptor. The protein is Olfactory receptor-like protein COR5 (COR5) of Gallus gallus (Chicken).